Here is a 502-residue protein sequence, read N- to C-terminus: 1-aminocyclopropane-1-carboxylate synthase-like protein 1 (502 aa).

The interval 15–35 (CPGSDSIQDLPSNKGDGLERE) is disordered. Glutamate 106 serves as a coordination point for substrate. Lysine 324 is modified (N6-(pyridoxal phosphate)lysine).

It belongs to the class-I pyridoxal-phosphate-dependent aminotransferase family.

Does not catalyze the synthesis of 1-aminocyclopropane-1-carboxylate but is capable of catalyzing the deamination of L-vinylglycine. The chain is 1-aminocyclopropane-1-carboxylate synthase-like protein 1 (ACCS) from Bos taurus (Bovine).